Reading from the N-terminus, the 80-residue chain is UPF0270 protein ASA_3305 (80 aa).

It belongs to the UPF0270 family.

The polypeptide is UPF0270 protein ASA_3305 (Aeromonas salmonicida (strain A449)).